Consider the following 89-residue polypeptide: uncharacterized protein (89 aa).

This sequence to B.licheniformis xpaF1 and to B.subtilis XhlA.

This is an uncharacterized protein from Bacillus licheniformis.